The sequence spans 398 residues: Cysteine protease ATG4A (398 aa).

Residue Cys-77 is the Nucleophile of the active site. Active-site residues include Asp-279 and His-281. The LIR motif lies at 393–396 (FEIL).

It belongs to the peptidase C54 family. In terms of assembly, interacts with ATG9A; the interaction is direct.

It localises to the cytoplasm. It carries out the reaction [protein]-C-terminal L-amino acid-glycyl-phosphatidylethanolamide + H2O = [protein]-C-terminal L-amino acid-glycine + a 1,2-diacyl-sn-glycero-3-phosphoethanolamine. Its activity is regulated as follows. Inhibited by N-ethylmaleimide. Redox-regulated during autophagy since reducing conditions activate ATG4A whereas an oxidizing environment such as the presence of H(2)O(2) inhibits its activity. In terms of biological role, cysteine protease that plays a key role in autophagy by mediating both proteolytic activation and delipidation of ATG8 family proteins. The protease activity is required for proteolytic activation of ATG8 family proteins: cleaves the C-terminal amino acid of ATG8 proteins to reveal a C-terminal glycine. Exposure of the glycine at the C-terminus is essential for ATG8 proteins conjugation to phosphatidylethanolamine (PE) and insertion to membranes, which is necessary for autophagy. Preferred substrate is GABARAPL2 followed by MAP1LC3A and GABARAP. Protease activity is also required to counteract formation of high-molecular weight conjugates of ATG8 proteins (ATG8ylation): acts as a deubiquitinating-like enzyme that removes ATG8 conjugated to other proteins, such as ATG3. In addition to the protease activity, also mediates delipidation of ATG8 family proteins. Catalyzes delipidation of PE-conjugated forms of ATG8 proteins during macroautophagy. Compared to ATG4B, the major protein for proteolytic activation of ATG8 proteins, shows weaker ability to cleave the C-terminal amino acid of ATG8 proteins, while it displays stronger delipidation activity. Involved in phagophore growth during mitophagy independently of its protease activity and of ATG8 proteins: acts by regulating ATG9A trafficking to mitochondria and promoting phagophore-endoplasmic reticulum contacts during the lipid transfer phase of mitophagy. Its function is as follows. (Microbial infection) Mediates cleavage of an ATG8 protein homolog coded in the genome of cytopathogenic bovine viral diarrhea virus (BVDV). The protein is Cysteine protease ATG4A of Bos taurus (Bovine).